Reading from the N-terminus, the 178-residue chain is UPF0232 protein cgR_0005 (178 aa).

The interval 16 to 55 (AMRRNGSVPDLNKNDAFRRPPAPKGGVEKRKKGRASGLDG) is disordered.

It belongs to the UPF0232 family.

The sequence is that of UPF0232 protein cgR_0005 from Corynebacterium glutamicum (strain R).